The following is a 170-amino-acid chain: Helix-loop-helix protein 3 (170 aa).

The span at 1-26 (MTASTSSTPSTSTKIPSSSKSSVTKQ) shows a compositional bias: low complexity. Disordered stretches follow at residues 1 to 42 (MTAS…VDQV) and 118 to 170 (TPSP…TETY). The basic motif; degenerate stretch occupies residues 26–39 (QTKQKRNERERKRV). The bHLH domain occupies 26-79 (QTKQKRNERERKRVDQVNQGFVLLQERVPKAAGNKAKLSKVETLREAARYIQEL). Positions 30-40 (KRNERERKRVD) are enriched in basic and acidic residues. Residues 40-79 (DQVNQGFVLLQERVPKAAGNKAKLSKVETLREAARYIQEL) form a helix-loop-helix motif region. Positions 143 to 157 (SHYYQESSSSSASTS) are enriched in low complexity.

Efficient DNA binding requires dimerization with another bHLH protein. Forms a heterodimer with hlh-2. In terms of tissue distribution, expressed in the ADL sensory neurons.

It localises to the nucleus. In terms of biological role, probable transcriptional regulator. May mediate transcriptional activation by binding to the E-box motif 5'-CANNTG-3'. Plays a role in the differentiation of the hermaphrodite-specific motor neurons (HSN) that are required for normal egg laying. Might play a role in serotonin production by regulating expression of the tryptophan hydrolase tph-1 which catalyzes serotonin synthesis, in the HSN neurons. Also plays a role in HSN axon guidance towards the vulva and the ventral nerve cord, possibly by promoting the expression of the netrin receptor unc-40. Under feeding conditions, involved in the regulation of the srh-234 chemoreceptor encoding gene expression in the ADL sensory neurons. Together with hlh-2, involved in the induction of programmed cell death in the sister cells of the serotonergic neurosecretory motor (NSM) neurons, probably through the activation of egl-1 transcription. The polypeptide is Helix-loop-helix protein 3 (Caenorhabditis elegans).